The chain runs to 299 residues: Secreted LysM effector ldpB (299 aa).

Positions Met1–Ser19 are cleaved as a signal peptide. 3 consecutive LysM domains span residues Trp46–Val91, Ala135–Ile182, and Lys211–Val258. N-linked (GlcNAc...) asparagine glycosylation is present at Asn154. Positions Ala266–Asp283 are enriched in low complexity. The interval Ala266 to Gln288 is disordered.

It belongs to the secreted LysM effector family.

The protein localises to the secreted. It is found in the cell wall. Its subcellular location is the extracellular space. The protein resides in the extracellular matrix. Functionally, cell wall chitin of A.fumigatus recruits lung eosinophils during infection and ldpB might have a role in sequestration of chitin and act as triggers of host immunity to dampen host defense. The polypeptide is Secreted LysM effector ldpB (Aspergillus fumigatus (strain ATCC MYA-4609 / CBS 101355 / FGSC A1100 / Af293) (Neosartorya fumigata)).